Reading from the N-terminus, the 400-residue chain is Subtilisin-like protease 1 (400 aa).

Positions 1–20 (MKFSQSLIALAACFLPLIAA) are cleaved as a signal peptide. Residues 21–119 (APVEAQHAKI…IEMDGKVQAN (99 aa)) constitute a propeptide that is removed on maturation. The 76-residue stretch at 42–117 (SYIVVFNKGV…AWIEMDGKVQ (76 aa)) folds into the Inhibitor I9 domain. Asparagine 82 carries an N-linked (GlcNAc...) asparagine glycan. The 273-residue stretch at 128–400 (TWGLGRISHK…NLIAYNGNGA (273 aa)) folds into the Peptidase S8 domain. Active-site charge relay system residues include aspartate 160, histidine 192, and serine 345.

Belongs to the peptidase S8 family.

The protein localises to the secreted. Functionally, major secreted subtilisin-like serine endopeptidase. Mediates the degradation of collagen, the major structural protein in the mammalian host. Degrades the nonhelical regions of collagen that function in the cross-linking of the helical components. May function as virulence factor involved in epidermal wing necrosis observed in white nose syndrome (WNS) in bats. The chain is Subtilisin-like protease 1 from Pseudogymnoascus destructans (strain ATCC MYA-4855 / 20631-21) (Bat white-nose syndrome fungus).